The following is a 586-amino-acid chain: Beta-fructofuranosidase, insoluble isoenzyme 3 (586 aa).

A signal peptide spans 1 to 26 (MATARARAALVFVALLQMAAVVVVRA). Residue D61 is part of the active site. 5 N-linked (GlcNAc...) asparagine glycosylation sites follow: N154, N179, N341, N390, and N479.

Belongs to the glycosyl hydrolase 32 family.

It is found in the secreted. Its subcellular location is the extracellular space. The protein localises to the apoplast. The protein resides in the cell wall. It catalyses the reaction Hydrolysis of terminal non-reducing beta-D-fructofuranoside residues in beta-D-fructofuranosides.. The polypeptide is Beta-fructofuranosidase, insoluble isoenzyme 3 (CIN3) (Oryza sativa subsp. indica (Rice)).